Consider the following 353-residue polypeptide: Probable D-xylulose reductase A (353 aa).

Zn(2+) contacts are provided by cysteine 42, histidine 67, and glutamate 68. Residue 177 to 182 coordinates NAD(+); that stretch reads GAGPVG.

This sequence belongs to the zinc-containing alcohol dehydrogenase family. Zn(2+) serves as cofactor.

It carries out the reaction xylitol + NAD(+) = D-xylulose + NADH + H(+). Its pathway is carbohydrate degradation; L-arabinose degradation via L-arabinitol; D-xylulose 5-phosphate from L-arabinose (fungal route): step 4/5. Functionally, xylitol dehydrogenase which catalyzes the conversion of xylitol to D-xylulose. Xylose is a major component of hemicelluloses such as xylan. Most fungi utilize D-xylose via three enzymatic reactions, xylose reductase (XR), xylitol dehydrogenase (XDH), and xylulokinase, to form xylulose 5-phosphate, which enters pentose phosphate pathway. This chain is Probable D-xylulose reductase A (xdhA), found in Aspergillus terreus (strain NIH 2624 / FGSC A1156).